The sequence spans 290 residues: 33 kDa chaperonin (290 aa).

2 cysteine pairs are disulfide-bonded: C235–C237 and C268–C271.

The protein belongs to the HSP33 family. Post-translationally, under oxidizing conditions two disulfide bonds are formed involving the reactive cysteines. Under reducing conditions zinc is bound to the reactive cysteines and the protein is inactive.

The protein localises to the cytoplasm. In terms of biological role, redox regulated molecular chaperone. Protects both thermally unfolding and oxidatively damaged proteins from irreversible aggregation. Plays an important role in the bacterial defense system toward oxidative stress. The chain is 33 kDa chaperonin from Streptococcus pyogenes serotype M49 (strain NZ131).